Here is a 148-residue protein sequence, read N- to C-terminus: MALYEHVLLARQDISQQQVDALVEQFKGVLEANGGKFGKVENWGLRPLTYRIKKNRKAYYTLVNIDAPAAAVAEMERQMRINEDVLRFLTVRVEEHEEGQSAMLTRRDDRRERDGDDRPRRREGGFDRGDRGDRGPRRPRDNEAGEGA.

Residues 96–148 (HEEGQSAMLTRRDDRRERDGDDRPRRREGGFDRGDRGDRGPRRPRDNEAGEGA) form a disordered region.

It belongs to the bacterial ribosomal protein bS6 family.

In terms of biological role, binds together with bS18 to 16S ribosomal RNA. This chain is Small ribosomal subunit protein bS6, found in Brucella abortus biovar 1 (strain 9-941).